The sequence spans 130 residues: Large ribosomal subunit protein bL17 (130 aa).

The protein belongs to the bacterial ribosomal protein bL17 family. Part of the 50S ribosomal subunit. Contacts protein L32.

This is Large ribosomal subunit protein bL17 from Shewanella halifaxensis (strain HAW-EB4).